A 262-amino-acid polypeptide reads, in one-letter code: 3-methyl-2-oxobutanoate hydroxymethyltransferase (262 aa).

D42 and D81 together coordinate Mg(2+). 3-methyl-2-oxobutanoate contacts are provided by residues 42–43 (DS), D81, and K110. A Mg(2+)-binding site is contributed by E112. The Proton acceptor role is filled by E180.

The protein belongs to the PanB family. As to quaternary structure, homodecamer; pentamer of dimers. Mg(2+) is required as a cofactor.

The protein localises to the cytoplasm. It catalyses the reaction 3-methyl-2-oxobutanoate + (6R)-5,10-methylene-5,6,7,8-tetrahydrofolate + H2O = 2-dehydropantoate + (6S)-5,6,7,8-tetrahydrofolate. It participates in cofactor biosynthesis; (R)-pantothenate biosynthesis; (R)-pantoate from 3-methyl-2-oxobutanoate: step 1/2. In terms of biological role, catalyzes the reversible reaction in which hydroxymethyl group from 5,10-methylenetetrahydrofolate is transferred onto alpha-ketoisovalerate to form ketopantoate. This Legionella pneumophila (strain Corby) protein is 3-methyl-2-oxobutanoate hydroxymethyltransferase.